The primary structure comprises 760 residues: Translocation protein SEC63 homolog (760 aa).

The Lumenal segment spans residues 1-14; sequence MAGQQFQYDDSGNT. The chain crosses the membrane as a helical span at residues 15–35; sequence FFYFLTSFVGLIVIPATYYLW. Residues 36-69 are Cytoplasmic-facing; sequence PRDQNAEQIRLKNIRKVYGRCMWYRLRLLKPQPN. Residues 70–90 form a helical membrane-spanning segment; it reads IIPTVKKIVLLAGWALFLFLA. Topologically, residues 91–188 are lumenal; sequence YKVSKTDREY…LPAWIVDQKN (98 aa). The J domain occupies 104–165; that stretch reads NPYEVLNLDP…ESRKNWEEFG (62 aa). Residues 189 to 209 form a helical membrane-spanning segment; sequence SILVLLVYGLAFMVILPVVVG. The SEC63 1 domain occupies 197-541; it reads GLAFMVILPV…LKKKPTPVLL (345 aa). Residues 210 to 760 are Cytoplasmic-facing; it reads SWWYRSIRYS…EEEEEEEDDD (551 aa). The segment at 492 to 617 is disordered; it reads AEEQPAEDGQ…DDEAEWQELQ (126 aa). Residues 518–536 are compositionally biased toward basic residues; sequence KGPKKTAKSKKKKPLKKKP. Position 537 is a phosphothreonine (T537). A compositionally biased stretch (basic and acidic residues) spans 582 to 608; that stretch reads NRDSQSEKDDGSDRDSDREQDEKQNKD. Positions 597-635 form a coiled coil; sequence SDREQDEKQNKDDEAEWQELQQSIQRKERALLETKSKIT. The SEC63 2 domain maps to 637-714; it reads PVYSLYFPEE…GLDQIKPLKL (78 aa). The interval 720–760 is disordered; the sequence is KPVPENHPQWDTAIEGDEDQEDSEGFEDSFEEEEEEEEDDD. A compositionally biased stretch (acidic residues) spans 733 to 760; that stretch reads IEGDEDQEDSEGFEDSFEEEEEEEEDDD. 2 positions are modified to phosphoserine: S742 and S748.

The ER translocon complex consists of channel-forming core components SEC61A1, SEC61B and SEC61G and different auxiliary components such as SEC62 and SEC63. As to expression, widely expressed, with high levels in the liver.

It is found in the endoplasmic reticulum membrane. Functionally, mediates cotranslational and post-translational transport of certain precursor polypeptides across endoplasmic reticulum (ER). Proposed to play an auxiliary role in recognition of precursors with short and apolar signal peptides. May cooperate with SEC62 and HSPA5/BiP to facilitate targeting of small presecretory proteins into the SEC61 channel-forming translocon complex, triggering channel opening for polypeptide translocation to the ER lumen. Required for efficient PKD1/Polycystin-1 biogenesis and trafficking to the plasma membrane of the primary cilia. This is Translocation protein SEC63 homolog from Homo sapiens (Human).